A 193-amino-acid chain; its full sequence is Interferon lambda-2 (193 aa).

The signal sequence occupies residues 1–19; that stretch reads MLLLLLPLLLAAVLTRTQA. N105 is a glycosylation site (N-linked (GlcNAc...) asparagine).

It belongs to the lambda interferon family.

Its subcellular location is the secreted. In terms of biological role, cytokine with antiviral, antitumour and immunomodulatory activities. Plays a critical role in the antiviral host defense, predominantly in the epithelial tissues. Acts as a ligand for the heterodimeric class II cytokine receptor composed of IL10RB and IFNLR1, and receptor engagement leads to the activation of the JAK/STAT signaling pathway resulting in the expression of IFN-stimulated genes (ISG), which mediate the antiviral state. Has a restricted receptor distribution and therefore restricted targets: is primarily active in epithelial cells and this cell type-selective action is because of the epithelial cell-specific expression of its receptor IFNLR1. Seems not to be essential for early virus-activated host defense in vaginal infection, but plays an important role in Toll-like receptor (TLR)-induced antiviral defense. Plays a significant role in the antiviral immune defense in the intestinal epithelium. Exerts an immunomodulatory effect by up-regulating MHC class I antigen expression. In Mus musculus (Mouse), this protein is Interferon lambda-2 (Ifnl2).